The primary structure comprises 200 residues: NADH-quinone oxidoreductase subunit C (200 aa).

The protein belongs to the complex I 30 kDa subunit family. As to quaternary structure, NDH-1 is composed of 14 different subunits. Subunits NuoB, C, D, E, F, and G constitute the peripheral sector of the complex.

The protein localises to the cell inner membrane. It carries out the reaction a quinone + NADH + 5 H(+)(in) = a quinol + NAD(+) + 4 H(+)(out). NDH-1 shuttles electrons from NADH, via FMN and iron-sulfur (Fe-S) centers, to quinones in the respiratory chain. The immediate electron acceptor for the enzyme in this species is believed to be ubiquinone. Couples the redox reaction to proton translocation (for every two electrons transferred, four hydrogen ions are translocated across the cytoplasmic membrane), and thus conserves the redox energy in a proton gradient. In Ralstonia pickettii (strain 12J), this protein is NADH-quinone oxidoreductase subunit C.